A 180-amino-acid chain; its full sequence is Probable nicotinate-nucleotide adenylyltransferase (180 aa).

Belongs to the NadD family.

It catalyses the reaction nicotinate beta-D-ribonucleotide + ATP + H(+) = deamido-NAD(+) + diphosphate. The protein operates within cofactor biosynthesis; NAD(+) biosynthesis; deamido-NAD(+) from nicotinate D-ribonucleotide: step 1/1. Its function is as follows. Catalyzes the reversible adenylation of nicotinate mononucleotide (NaMN) to nicotinic acid adenine dinucleotide (NaAD). The chain is Probable nicotinate-nucleotide adenylyltransferase from Pelagibacter ubique (strain HTCC1062).